The following is a 1451-amino-acid chain: Dicer-like protein 2 (1451 aa).

The tract at residues 34 to 53 (YDGHLSEEDSPGGKPRPKEQ) is disordered. The 178-residue stretch at 70 to 247 (MLEASLKENI…LKRLESTLDA (178 aa)) folds into the Helicase ATP-binding domain. 83-90 (MDTGSGKT) contacts ATP. The DEAH box signature appears at 190-193 (DEAH). The 171-residue stretch at 412–582 (KVQRIIEVLL…RLEAIENSEA (171 aa)) folds into the Helicase C-terminal domain. Positions 603–704 (AKSHLQHFVS…LPLRDRLELE (102 aa)) constitute a Dicer dsRNA-binding fold domain. RNase III domains follow at residues 968-1111 (AAEL…VDGG) and 1153-1351 (LQLL…VDAG). Glu-1192 contributes to the Mg(2+) binding site. The tract at residues 1253–1272 (EGDSDSKSSGDSTSDKASPR) is disordered. Residues Asp-1337 and Glu-1340 each contribute to the Mg(2+) site.

This sequence belongs to the helicase family. Dicer subfamily. Mg(2+) is required as a cofactor. The cofactor is Mn(2+).

Functionally, dicer-like endonuclease involved in cleaving double-stranded RNA in the RNA interference (RNAi) pathway. Produces 21 to 25 bp dsRNAs (siRNAs) which target the selective destruction of homologous RNAs leading to sequence-specific suppression of gene expression, called post-transcriptional gene silencing (PTGS). Part of a broad host defense, DCL-2 is involved in antiviral defense against mycoviruses like the hypovirus CHV1-EP713 and the reovirus MyRV1-Cp9B21. The chain is Dicer-like protein 2 (DCL-2) from Cryphonectria parasitica (Chestnut blight fungus).